The following is an 89-amino-acid chain: Small ribosomal subunit protein uS17 (89 aa).

Belongs to the universal ribosomal protein uS17 family. Part of the 30S ribosomal subunit.

In terms of biological role, one of the primary rRNA binding proteins, it binds specifically to the 5'-end of 16S ribosomal RNA. The polypeptide is Small ribosomal subunit protein uS17 (Xylella fastidiosa (strain Temecula1 / ATCC 700964)).